The chain runs to 170 residues: Peptide deformylase (170 aa).

Positions 93 and 135 each coordinate Fe cation. Glutamate 136 is a catalytic residue. Histidine 139 is a Fe cation binding site.

Belongs to the polypeptide deformylase family. Fe(2+) is required as a cofactor.

The catalysed reaction is N-terminal N-formyl-L-methionyl-[peptide] + H2O = N-terminal L-methionyl-[peptide] + formate. Removes the formyl group from the N-terminal Met of newly synthesized proteins. Requires at least a dipeptide for an efficient rate of reaction. N-terminal L-methionine is a prerequisite for activity but the enzyme has broad specificity at other positions. This is Peptide deformylase from Acidobacterium capsulatum (strain ATCC 51196 / DSM 11244 / BCRC 80197 / JCM 7670 / NBRC 15755 / NCIMB 13165 / 161).